Consider the following 234-residue polypeptide: Cell adhesion molecule CEACAM15 (234 aa).

The first 32 residues, 1–32 (MGAETMESPSLFLCKGLLLTASLLICWNWSTA), serve as a signal peptide directing secretion. Asn-28, Asn-75, Asn-151, and Asn-184 each carry an N-linked (GlcNAc...) asparagine glycan. The region spanning 146–226 (PYLQLNHTRL…NSFSSKKSYP (81 aa)) is the Ig-like C2-type domain. Residues Cys-165 and Cys-213 are joined by a disulfide bond.

Belongs to the immunoglobulin superfamily. CEA family. In terms of tissue distribution, detected in placenta.

This chain is Cell adhesion molecule CEACAM15, found in Mus musculus (Mouse).